The chain runs to 1350 residues: MQHGSLGPSSSSRKTTVTSTAGSVHLHHRSSNGFSTASRAQLNRHNEMDFGKMFAAMEKGHKVCKIAVLKKWDPAYKQLTLDRYSRQIFLTKLELSAVRNKPTILDIRQIREVQTLNYKLNTIKVDDKWKKDREIVNFDSKAILIISYGMGFALSYWILLFESEDACKLWSQGLHNLMMDTRDRDSSPHPLRIERFLHKHFLSLMSPANDAVARKHMKPFVQTSLQFKVQSDQLQQVTEDQMNSDQFSFASRQLIHVPELFSSRFADLAEKHERKGLVVTFQNFLRFLDGKQFDELASNRTRALEFLNRYFQEDQAYFGDRNEPSMTVFEFCDFLFSRENSLWDPTNEKVTHDMSRPLSHYWIASSHNTYLTGDQLRSESSLDCYAQALLMGCRCIELDCWDGQKKPGSAEFIDIVIYHGYTMTSKILLRDVLHVIRHYAFVTSEYPVILSIEDNCSVPAQRLLAQELKDILGDYLLTQPANREEKQLPSPAALKKKIIVKHKKLPIESEDLAAVVKTDEFQDTEIISRECVKKGILMVKNNNSHEWTSHVFILFPDRLCYLIQTADPENPNDDTVSVSGDEEREEETPSGFGVKPEEMHVTEEWFHGRCERDEAKKRILEHKEKGNGLFMIRDSNLFIGDFSLSILHDGKVHHVRIRSKIIDKEKKYYFMDNKVCDTLYELVSYYTRHYLTTAHFKMVLTIPCPQPQPHLNQPWFSATADKEKAEELLSLVPEDGAFLIRTSSTDSSVYVLSLKVDGEFWHYRLKRDGRIFVVNQKVFENLNQIVEFYANREFVRGISLRFPVNEKDISHLTAELAEARTPGCYMDLKDLDKEVQARALRPYRGTADDELSFPANVIITVLRKEEGLWRGRYGSLTGWFPSAHVQEILPEKVSTSETSNYNTIELAGTLIERIHDADRPNVIRISQSNQHWMNKQYYLLAASSSEEADGWQNNLFELTRSVNTKMSILRTKEKEKRIAAELSNLVVYCQAVPFDPAHIYNDAFYEMCSFVEGKLDKLVEKGLLPFNSRKLSRVYPNGSRITSNNYSPVPMWNAGCHMVALNYQTGDKPMQLNQGKFLANGRCGYLLKPDYMLTDDFDPTNTEKFATAYPIRLNVQVIGGRHLSRKDKNKGICSPFVEIEIIGMPCDTKVFQTKTIASNGLNPIWNQTFTFEIQCPEVALIRFHVEDGDFVGPKTDPFIGQAVFPVDSIRCGFRSVPLKNQYSEELELSSLLVDVQMCSREGTQLIRSSSHFLQASRLAPVFAHRKITNGDSIPREMAPRLRTSATDRSLDSPTNSESRATLLSGQRGSQDSMDSAAETSSIASGTISSRDGKKKQNWLKKFSFGKSSKS.

The segment at 1–40 is disordered; sequence MQHGSLGPSSSSRKTTVTSTAGSVHLHHRSSNGFSTASRA. Low complexity predominate over residues 9-20; the sequence is SSSSRKTTVTST. Residues 31-40 are compositionally biased toward polar residues; sequence SNGFSTASRA. In terms of domain architecture, PI-PLC X-box spans 352 to 503; it reads HDMSRPLSHY…LKKKIIVKHK (152 aa). Residues His367 and His419 contribute to the active site. The disordered stretch occupies residues 570–594; that stretch reads NPNDDTVSVSGDEEREEETPSGFGV. 2 consecutive SH2 domains span residues 605-704 and 715-804; these read WFHG…TIPC and WFSA…RFPV. One can recognise an SH3 domain in the interval 832–890; that stretch reads DKEVQARALRPYRGTADDELSFPANVIITVLRKEEGLWRGRYGSLTGWFPSAHVQEILP. Residues 855-960 enclose the PH domain; sequence ANVIITVLRK…WQNNLFELTR (106 aa). The 111-residue stretch at 982 to 1092 folds into the PI-PLC Y-box domain; that stretch reads LSNLVVYCQA…CGYLLKPDYM (111 aa). Residues 1099–1220 enclose the C2 domain; the sequence is PTNTEKFATA…CGFRSVPLKN (122 aa). The disordered stretch occupies residues 1270 to 1350; it reads GDSIPREMAP…KFSFGKSSKS (81 aa). Residues 1283-1329 show a composition bias toward polar residues; sequence TSATDRSLDSPTNSESRATLLSGQRGSQDSMDSAAETSSIASGTISS. The span at 1340-1350 shows a compositional bias: low complexity; it reads KKFSFGKSSKS.

It depends on Ca(2+) as a cofactor. In terms of tissue distribution, expressed in intestine, isthmus of the pharynx, proximal gonad sheath cells, spermatheca and uterine sheath cells. In males, expressed in the valve cell, the vas deferens and retractor and ventral protactor muscles.

It catalyses the reaction a 1,2-diacyl-sn-glycero-3-phospho-(1D-myo-inositol-4,5-bisphosphate) + H2O = 1D-myo-inositol 1,4,5-trisphosphate + a 1,2-diacyl-sn-glycerol + H(+). Mediates the production of the second messenger molecules diacylglycerol (DAG) and inositol 1,4,5-trisphosphate (IP3) which plays an important role in the regulation of intracellular signaling cascades. Regulates basal and ovulatory sheath cell contractions by controlling Ca(2+) oscillations via IP3-mediated activation of IP3 receptor itr-1. In intestinal epithelial cells, regulates Ca(2+) oscillations which control posterior body wall muscle contractions required for defecation by IP3-mediated activation of itr-1 and probably by activating TRPM channels gon-2 and gtl-1 by reducing PIP2 levels. By activating tpa-1 via DAG production, required for the expression of antimicrobial peptide nlp-29 in the epidermis in response to fungal infection or physical injury. By triggering Ca(2+) transient via IP3-mediated activation of IPR3 receptor itr-1 in ASH sensory neurons, involved in avoidance behavior in response to nose touch. Probably by regulating neuronal transmission in ALA neurons, mediates the decrease in pharyngeal pumping and locomotion during the quiescent state that precedes each larval molt, downstream of lin-3 and receptor let-23 and upstream of tpa-1 but not itr-1. During embryogenesis, may play an role in epidermal morphogenesis together with plc-1. Probably downstream of receptor daf-2, regulates male-sex muscle excitability in the absence of food. The chain is 1-phosphatidylinositol 4,5-bisphosphate phosphodiesterase gamma plc-3 from Caenorhabditis elegans.